We begin with the raw amino-acid sequence, 286 residues long: Beta-lactamase SHV-1 (286 aa).

Positions 1–21 (MRYIRLCIISLLATLPLAVHA) are cleaved as a signal peptide. The Acyl-ester intermediate role is filled by Ser66. Residues Cys73 and Cys119 are joined by a disulfide bond. Residue Glu164 is the Proton acceptor of the active site. 230–232 (KTG) lines the substrate pocket.

It belongs to the class-A beta-lactamase family.

It carries out the reaction a beta-lactam + H2O = a substituted beta-amino acid. This Escherichia coli protein is Beta-lactamase SHV-1 (bla).